We begin with the raw amino-acid sequence, 831 residues long: Protein ADP-ribosyltransferase PARP3 (831 aa).

The segment at M1–L69 is disordered. 2 stretches are compositionally biased toward basic and acidic residues: residues E15 to E32 and K43 to E66. The region spanning E49–D199 is the PADR1 zinc-binding domain. The tract at residues G124 to P168 is zinc ribbon. Zn(2+) contacts are provided by C129, C132, C145, and C155. Residues E200 to I290 form the BRCT domain. In terms of domain architecture, WGR spans G338 to M439. The region spanning H466–G585 is the PARP alpha-helical domain. The PARP catalytic domain occupies D594–V827.

It belongs to the ARTD/PARP family.

It localises to the nucleus. It catalyses the reaction L-aspartyl-[protein] + NAD(+) = 4-O-(ADP-D-ribosyl)-L-aspartyl-[protein] + nicotinamide. The enzyme catalyses L-glutamyl-[protein] + NAD(+) = 5-O-(ADP-D-ribosyl)-L-glutamyl-[protein] + nicotinamide. Its function is as follows. Involved in the base excision repair (BER) pathway, by catalyzing the poly(ADP-ribosyl)ation of a limited number of acceptor proteins involved in chromatin architecture and in DNA metabolism. This modification follows DNA damages and appears as an obligatory step in a detection/signaling pathway leading to the reparation of DNA strand breaks. This Oryza sativa subsp. japonica (Rice) protein is Protein ADP-ribosyltransferase PARP3 (PARP3).